The following is a 153-amino-acid chain: Large ribosomal subunit protein uL22 (153 aa).

The protein belongs to the universal ribosomal protein uL22 family. In terms of assembly, part of the 50S ribosomal subunit.

Functionally, this protein binds specifically to 23S rRNA. It makes multiple contacts with different domains of the 23S rRNA in the assembled 50S subunit and ribosome. In terms of biological role, the globular domain of the protein is located near the polypeptide exit tunnel on the outside of the subunit, while an extended beta-hairpin is found that lines the wall of the exit tunnel in the center of the 70S ribosome. The polypeptide is Large ribosomal subunit protein uL22 (Methanococcus vannielii (strain ATCC 35089 / DSM 1224 / JCM 13029 / OCM 148 / SB)).